A 629-amino-acid chain; its full sequence is Phosphomethylpyrimidine synthase (629 aa).

Positions 1 to 30 are disordered; the sequence is MTTKLKNASNLSESAQVDQQSVQPFTRSQK. Substrate is bound by residues Asn233, Met262, Tyr291, His327, 347–349, 388–391, and Glu427; these read SRG and DGLR. Residue His431 participates in Zn(2+) binding. Residue Tyr454 coordinates substrate. His495 is a binding site for Zn(2+). Cys575, Cys578, and Cys583 together coordinate [4Fe-4S] cluster.

The protein belongs to the ThiC family. In terms of assembly, homodimer. [4Fe-4S] cluster is required as a cofactor.

It carries out the reaction 5-amino-1-(5-phospho-beta-D-ribosyl)imidazole + S-adenosyl-L-methionine = 4-amino-2-methyl-5-(phosphooxymethyl)pyrimidine + CO + 5'-deoxyadenosine + formate + L-methionine + 3 H(+). It functions in the pathway cofactor biosynthesis; thiamine diphosphate biosynthesis. In terms of biological role, catalyzes the synthesis of the hydroxymethylpyrimidine phosphate (HMP-P) moiety of thiamine from aminoimidazole ribotide (AIR) in a radical S-adenosyl-L-methionine (SAM)-dependent reaction. The chain is Phosphomethylpyrimidine synthase from Pseudomonas fluorescens (strain ATCC BAA-477 / NRRL B-23932 / Pf-5).